The chain runs to 407 residues: uncharacterized protein (407 aa).

The EAL domain occupies 1 to 250 (MLDPLDILTN…LERDVLKQRL (250 aa)).

This is an uncharacterized protein from Bacillus subtilis (strain 168).